The chain runs to 172 residues: Regulator of hemoglobinization and erythroid cell expansion protein (172 aa).

Residues 9–29 (WHGLVIAVVSLFLQACFLTAI) traverse the membrane as a helical segment. The interval 52–106 (VPRPSPGHHHPPAVKEMKETQTERDIPMSDSLYRHDSDTPSDSLDSSCSSPPACQ) is disordered. Residues 64-89 (AVKEMKETQTERDIPMSDSLYRHDSD) are compositionally biased toward basic and acidic residues. A compositionally biased stretch (low complexity) spans 91–103 (PSDSLDSSCSSPP). A phosphotyrosine mark is found at Tyr-132 and Tyr-141.

As to quaternary structure, interacts with EPOR; this interaction occurs in a erythropoietin (EPO)-dependent manner. Interacts with JAK2; this interaction occurs in a erythropoietin (EPO)-dependent manner. Interacts (via tyrosine-phosphorylated form) with GRB2. Phosphorylated. Phosphorylation on Tyr-132 and Tyr-141 occurs in a erythropoietin (EPO)-dependent manner. In terms of tissue distribution, expressed in the proerythroblasts (at protein level). Expressed strongly in the kidney. Expressed weakly in the pancreas, liver and lung. Expressed strongly in erythroid progenitor cells (EPCs). Expressed weakly in T-cells and neutrophils.

The protein resides in the cell membrane. In terms of biological role, acts as a signaling transduction factor of the EPO-EPOR signaling pathway promoting erythroid cell differentiation. This is Regulator of hemoglobinization and erythroid cell expansion protein from Homo sapiens (Human).